An 89-amino-acid chain; its full sequence is Small ribosomal subunit protein uS15 (89 aa).

It belongs to the universal ribosomal protein uS15 family. As to quaternary structure, part of the 30S ribosomal subunit. Forms a bridge to the 50S subunit in the 70S ribosome, contacting the 23S rRNA.

One of the primary rRNA binding proteins, it binds directly to 16S rRNA where it helps nucleate assembly of the platform of the 30S subunit by binding and bridging several RNA helices of the 16S rRNA. Functionally, forms an intersubunit bridge (bridge B4) with the 23S rRNA of the 50S subunit in the ribosome. This Prochlorococcus marinus subsp. pastoris (strain CCMP1986 / NIES-2087 / MED4) protein is Small ribosomal subunit protein uS15.